The primary structure comprises 365 residues: DNA replication and repair protein RecF (365 aa).

An ATP-binding site is contributed by 30-37 (GDNGEGKT).

Belongs to the RecF family.

It is found in the cytoplasm. Functionally, the RecF protein is involved in DNA metabolism; it is required for DNA replication and normal SOS inducibility. RecF binds preferentially to single-stranded, linear DNA. It also seems to bind ATP. This chain is DNA replication and repair protein RecF, found in Leptospira interrogans serogroup Icterohaemorrhagiae serovar copenhageni (strain Fiocruz L1-130).